Consider the following 66-residue polypeptide: Prophage transcriptional regulatory protein (66 aa).

The sequence is that of Prophage transcriptional regulatory protein (croE) from Escherichia coli (strain K12).